A 292-amino-acid polypeptide reads, in one-letter code: 11-beta-hydroxysteroid dehydrogenase 1 (292 aa).

Over 2–7 (HFMKKY) the chain is Cytoplasmic. A helical; Signal-anchor for type II membrane protein transmembrane segment spans residues 8–24 (LLPILVLFLAYYYYSTK). Residues 25–292 (EEFRPEMLQG…SFTFDKLISS (268 aa)) lie on the Lumenal side of the membrane. Residues 41–67 (GASK…TARS), 92–93 (TM), and 119–121 (NHI) each bind NADP(+). N-linked (GlcNAc...) asparagine glycosylation is present at Asn-162. Ser-170 contacts substrate. Tyr-183 acts as the Proton acceptor in catalysis. Residue 183 to 187 (YSASK) coordinates NADP(+). N-linked (GlcNAc...) asparagine glycosylation is present at Asn-207. 218-222 (INTET) lines the NADP(+) pocket.

Belongs to the short-chain dehydrogenases/reductases (SDR) family. In terms of assembly, homodimer. As to expression, detected in adrenal gland, liver, kidney, testis, and at lower levels in brain and lung (at protein level).

It is found in the endoplasmic reticulum membrane. It carries out the reaction an 11beta-hydroxysteroid + NADP(+) = an 11-oxosteroid + NADPH + H(+). The enzyme catalyses corticosterone + NADP(+) = 11-dehydrocorticosterone + NADPH + H(+). The catalysed reaction is a 7beta-hydroxysteroid + NADP(+) = a 7-oxosteroid + NADPH + H(+). It catalyses the reaction 7-oxocholesterol + NADPH + H(+) = 7beta-hydroxycholesterol + NADP(+). It carries out the reaction 7-oxocholesterol + NADPH + H(+) = 7alpha-hydroxycholesterol + NADP(+). The enzyme catalyses chenodeoxycholate + NADP(+) = 7-oxolithocholate + NADPH + H(+). The catalysed reaction is 7-oxolithocholate + NADPH + H(+) = ursodeoxycholate + NADP(+). It catalyses the reaction glycochenodeoxycholate + NADP(+) = 7-oxoglycolithocholate + NADPH + H(+). It carries out the reaction taurochenodeoxycholate + NADP(+) = 7-oxotaurolithocholate + NADPH + H(+). The enzyme catalyses tauroursodeoxycholate + NADP(+) = 7-oxotaurolithocholate + NADPH + H(+). The catalysed reaction is glycoursodeoxycholate + NADP(+) = 7-oxoglycolithocholate + NADPH + H(+). It catalyses the reaction 7-oxopregnenolone + NADPH + H(+) = 7beta-hydroxypregnenolone + NADP(+). It carries out the reaction 3beta,7alpha-dihydroxyandrost-5-en-17-one + NADP(+) = 3beta-hydroxy-5-androstene-7,17-dione + NADPH + H(+). The enzyme catalyses 3beta-hydroxy-5-androstene-7,17-dione + NADPH + H(+) = 3beta,7beta-dihydroxyandrost-5-en-17-one + NADP(+). The catalysed reaction is 3beta-hydroxy-5alpha-androstane-7,17-dione + NADPH + H(+) = 3beta,7beta-dihydroxy-5alpha-androstan-17-one + NADP(+). It functions in the pathway steroid metabolism. In terms of biological role, controls the reversible conversion of biologically active glucocorticoids such as 11-dehydrocorticosterone to corticosterone in the presence of NADP(H). Participates in the corticosteroid receptor-mediated anti-inflammatory response, as well as metabolic and homeostatic processes. Bidirectional in vitro, predominantly functions as a reductase in vivo, thereby increasing the concentration of active glucocorticoids. It has broad substrate specificity, besides glucocorticoids, it accepts other steroid and sterol substrates. Interconverts 7-oxo- and 7-hydroxy-neurosteroids such as 7-oxopregnenolone and 7beta-hydroxypregnenolone, 7-oxodehydroepiandrosterone (3beta-hydroxy-5-androstene-7,17-dione) and 7beta-hydroxydehydroepiandrosterone (3beta,7beta-dihydroxyandrost-5-en-17-one), among others. Catalyzes reversibly the conversion of the major dietary oxysterol, 7-ketocholesterol (7-oxocholesterol), into the more polar 7-beta-hydroxycholesterol and 7-alpha-hhydroxycholesterol metabolites. 7-oxocholesterol is one of the most important oxysterols, it participates in several events such as induction of apoptosis, accumulation in atherosclerotic lesions, lipid peroxidation, and induction of foam cell formation. Mediates the 7-oxo reduction of 7-oxolithocholate mainly to chenodeoxycholate, and to a lesser extent to ursodeoxycholate, both in its free form and when conjugated to glycine or taurine, providing a link between glucocorticoid activation and bile acid metabolism. Catalyzes the synthesis of 7-beta-25-dihydroxycholesterol from 7-oxo-25-hydroxycholesterol in vitro, which acts as a ligand for the G-protein-coupled receptor (GPCR) Epstein-Barr virus-induced gene 2 (EBI2) and may thereby regulate immune cell migration. The chain is 11-beta-hydroxysteroid dehydrogenase 1 (HSD11B1) from Mesocricetus auratus (Golden hamster).